A 178-amino-acid chain; its full sequence is Inorganic pyrophosphatase (178 aa).

Residues K30, R44, and Y56 each contribute to the substrate site. The Mg(2+) site is built by D66, D71, and D103. Substrate is bound at residue Y142.

The protein belongs to the PPase family. In terms of assembly, homohexamer. It depends on Mg(2+) as a cofactor.

The protein localises to the cytoplasm. It carries out the reaction diphosphate + H2O = 2 phosphate + H(+). Catalyzes the hydrolysis of inorganic pyrophosphate (PPi) forming two phosphate ions. This Bradyrhizobium diazoefficiens (strain JCM 10833 / BCRC 13528 / IAM 13628 / NBRC 14792 / USDA 110) protein is Inorganic pyrophosphatase.